A 159-amino-acid polypeptide reads, in one-letter code: Odorant-binding protein (159 aa).

Belongs to the calycin superfamily. Lipocalin family. Homodimer.

The protein localises to the secreted. This protein binds a wide variety of chemical odorants. The protein is Odorant-binding protein of Bos taurus (Bovine).